The sequence spans 154 residues: Style cell-cycle inhibitor 1-A (154 aa).

Composition is skewed to basic and acidic residues over residues 1 to 11 (MGSDKKTPEEK) and 24 to 48 (DEVKSKRQNIKGDEERRKEKKDKSK). The disordered stretch occupies residues 1 to 84 (MGSDKKTPEE…DKSKNKFEEL (84 aa)). The span at 63 to 77 (GEKHKTKSHKHKDKS) shows a compositional bias: basic residues.

In terms of tissue distribution, specifically expressed in flowers pistils, especially in stigmas and styles. Barely detected in roots, stems, leaves, sepals, petals and stamen.

Its subcellular location is the nucleus. Component of the auxin signaling transduction pathway that regulates cell proliferation and differentiation during flowers stigmas and styles development. Involved in the regulation of auxin-related genes. This chain is Style cell-cycle inhibitor 1-A, found in Nicotiana tabacum (Common tobacco).